The sequence spans 362 residues: MMKRNILAVIVPALLVAGTANAAEIYNKDGNKVDLYGKAVGLHYFSKGNGENSYGGNGDMTYARLGFKGETQINSDLTGYGQWEYNFQGNNSEGADAQTGNKTRLAFAGLKYADVGSFDYGRNYGVVYDALGYTDMLPEFGGDTAYSDDFFVGRVGGVATYRNSNFFGLVDGLNFAVQYLGKNERDTARRSNGDGVGGSISYEYEGFGIVGAYGAADRTNLQEAQPLGNGKKAEQWATGLKYDANNIYLAANYGETRNATPITNKFTNTSGFANKTQDVLLVAQYQFDFGLRPSIAYTKSKAKDVEGIGDVDLVNYFEVGATYYFNKNMSTYVDYIINQIDSDNKLGVGSDDTVAVGIVYQF.

A signal peptide spans methionine 1–alanine 22. A beta stranded membrane pass occupies residues alanine 23–lysine 28. Residue aspartate 29 is a topological domain, periplasmic. The chain crosses the membrane as a beta stranded span at residues glycine 30 to phenylalanine 45. Topologically, residues serine 46–methionine 60 are extracellular. A beta stranded membrane pass occupies residues threonine 61–isoleucine 73. The Periplasmic portion of the chain corresponds to asparagine 74–serine 75. The chain crosses the membrane as a beta stranded span at residues aspartate 76 to glutamine 88. At glycine 89–arginine 104 the chain is on the extracellular side. The beta stranded transmembrane segment at leucine 105–alanine 113 threads the bilayer. Over aspartate 114–valine 115 the chain is Periplasmic. A beta stranded transmembrane segment spans residues glycine 116–arginine 122. At asparagine 123 to glycine 156 the chain is on the extracellular side. The beta stranded transmembrane segment at glycine 157–asparagine 163 threads the bilayer. Topologically, residues serine 164–aspartate 171 are periplasmic. A beta stranded transmembrane segment spans residues glycine 172 to glycine 181. At lysine 182–glycine 193 the chain is on the extracellular side. A beta stranded membrane pass occupies residues aspartate 194–tyrosine 204. Position 205 (glutamate 205) is a topological domain, periplasmic. The chain crosses the membrane as a beta stranded span at residues glycine 206 to aspartate 217. Residues arginine 218–lysine 232 lie on the Extracellular side of the membrane. Residues alanine 233–alanine 244 traverse the membrane as a beta stranded segment. A topological domain (periplasmic) is located at residue asparagine 245. Residues asparagine 246–arginine 257 traverse the membrane as a beta stranded segment. At asparagine 258–asparagine 274 the chain is on the extracellular side. The beta stranded transmembrane segment at lysine 275–phenylalanine 287 threads the bilayer. The Periplasmic segment spans residues aspartate 288–phenylalanine 289. A beta stranded transmembrane segment spans residues glycine 290–lysine 303. Residues aspartate 304–leucine 313 are Extracellular-facing. Residues valine 314–phenylalanine 325 form a beta stranded membrane-spanning segment. Over asparagine 326–lysine 327 the chain is Periplasmic. A beta stranded membrane pass occupies residues asparagine 328 to isoleucine 337. The Extracellular portion of the chain corresponds to asparagine 338 to aspartate 352. Residues threonine 353–phenylalanine 362 traverse the membrane as a beta stranded segment.

Belongs to the Gram-negative porin family. In terms of assembly, homotrimer. Forms mixed heterotrimers with OmpC and with PhoE; other mixed heterotrimers are also probable. (Microbial infection) Trimeric complexes with colicin E3, BtuB and OmpF can be cross-linked and immunoprecipitated.

The protein resides in the cell outer membrane. Forms pores that allow passive diffusion of small molecules across the outer membrane. Functionally, (Microbial infection) It is also a receptor for the bacteriophage T2. Is the major receptor for colicin E5. In terms of biological role, (Microbial infection) Probably translocates colicin E3 (and other A-type colicins) across the outer membrane. Its function is as follows. (Microbial infection) A mixed OmpC-OmpF heterotrimer is the outer membrane receptor for toxin CdiA-EC536 (ECL_04451); polymorphisms in extracellular loops 4 and 5 of OmpC confer susceptibility to CdiA-EC536-mediated toxicity. The chain is Outer membrane porin F (ompF) from Escherichia coli (strain K12).